Reading from the N-terminus, the 553-residue chain is Dihydroxy-acid dehydratase (553 aa).

A Mg(2+)-binding site is contributed by Asp78. Cys119 is a binding site for [2Fe-2S] cluster. Positions 120 and 121 each coordinate Mg(2+). Lys121 bears the N6-carboxylysine mark. Cys191 lines the [2Fe-2S] cluster pocket. Glu444 is a binding site for Mg(2+). Residue Ser470 is the Proton acceptor of the active site.

The protein belongs to the IlvD/Edd family. As to quaternary structure, homodimer. [2Fe-2S] cluster serves as cofactor. The cofactor is Mg(2+).

The enzyme catalyses (2R)-2,3-dihydroxy-3-methylbutanoate = 3-methyl-2-oxobutanoate + H2O. It carries out the reaction (2R,3R)-2,3-dihydroxy-3-methylpentanoate = (S)-3-methyl-2-oxopentanoate + H2O. Its pathway is amino-acid biosynthesis; L-isoleucine biosynthesis; L-isoleucine from 2-oxobutanoate: step 3/4. The protein operates within amino-acid biosynthesis; L-valine biosynthesis; L-valine from pyruvate: step 3/4. In terms of biological role, functions in the biosynthesis of branched-chain amino acids. Catalyzes the dehydration of (2R,3R)-2,3-dihydroxy-3-methylpentanoate (2,3-dihydroxy-3-methylvalerate) into 2-oxo-3-methylpentanoate (2-oxo-3-methylvalerate) and of (2R)-2,3-dihydroxy-3-methylbutanoate (2,3-dihydroxyisovalerate) into 2-oxo-3-methylbutanoate (2-oxoisovalerate), the penultimate precursor to L-isoleucine and L-valine, respectively. The polypeptide is Dihydroxy-acid dehydratase (Methanococcoides burtonii (strain DSM 6242 / NBRC 107633 / OCM 468 / ACE-M)).